A 264-amino-acid chain; its full sequence is NAD-capped RNA hydrolase NudC (264 aa).

Arginine 70 is a substrate binding site. The Zn(2+) site is built by cysteine 99 and cysteine 102. Glutamate 112 is a binding site for substrate. The Zn(2+) site is built by cysteine 117 and cysteine 122. Residue tyrosine 127 coordinates substrate. One can recognise a Nudix hydrolase domain in the interval 128–257 (PVICPSIIVA…TIALKLINAT (130 aa)). The a divalent metal cation site is built by alanine 166, glutamate 182, and glutamate 186. A Nudix box motif is present at residues 167–188 (GFVEIGESFEQTVEREVFEETG). 200–207 (QPWAFPNS) provides a ligand contact to substrate. Residue glutamate 227 participates in a divalent metal cation binding. Alanine 250 contributes to the substrate binding site.

It belongs to the Nudix hydrolase family. NudC subfamily. Homodimer. Requires Mg(2+) as cofactor. Mn(2+) is required as a cofactor. It depends on Zn(2+) as a cofactor.

It catalyses the reaction a 5'-end NAD(+)-phospho-ribonucleoside in mRNA + H2O = a 5'-end phospho-adenosine-phospho-ribonucleoside in mRNA + beta-nicotinamide D-ribonucleotide + 2 H(+). The enzyme catalyses NAD(+) + H2O = beta-nicotinamide D-ribonucleotide + AMP + 2 H(+). The catalysed reaction is NADH + H2O = reduced beta-nicotinamide D-ribonucleotide + AMP + 2 H(+). Its function is as follows. mRNA decapping enzyme that specifically removes the nicotinamide adenine dinucleotide (NAD) cap from a subset of mRNAs by hydrolyzing the diphosphate linkage to produce nicotinamide mononucleotide (NMN) and 5' monophosphate mRNA. The NAD-cap is present at the 5'-end of some mRNAs and stabilizes RNA against 5'-processing. Has preference for mRNAs with a 5'-end purine. Catalyzes the hydrolysis of a broad range of dinucleotide pyrophosphates. This Actinobacillus succinogenes (strain ATCC 55618 / DSM 22257 / CCUG 43843 / 130Z) protein is NAD-capped RNA hydrolase NudC.